The primary structure comprises 223 residues: Deoxyribose-phosphate aldolase (223 aa).

The active-site Proton donor/acceptor is the aspartate 89. Residue lysine 152 is the Schiff-base intermediate with acetaldehyde of the active site. Lysine 181 serves as the catalytic Proton donor/acceptor.

The protein belongs to the DeoC/FbaB aldolase family. DeoC type 1 subfamily.

The protein resides in the cytoplasm. The catalysed reaction is 2-deoxy-D-ribose 5-phosphate = D-glyceraldehyde 3-phosphate + acetaldehyde. Its pathway is carbohydrate degradation; 2-deoxy-D-ribose 1-phosphate degradation; D-glyceraldehyde 3-phosphate and acetaldehyde from 2-deoxy-alpha-D-ribose 1-phosphate: step 2/2. Catalyzes a reversible aldol reaction between acetaldehyde and D-glyceraldehyde 3-phosphate to generate 2-deoxy-D-ribose 5-phosphate. The sequence is that of Deoxyribose-phosphate aldolase from Bacillus cereus (strain ATCC 10987 / NRS 248).